A 369-amino-acid chain; its full sequence is Putative 2-aminoethylphosphonate import ATP-binding protein PhnT (369 aa).

An ABC transporter domain is found at Ile19 to Leu250. Position 51–58 (Gly51–Thr58) interacts with ATP.

This sequence belongs to the ABC transporter superfamily. 2-aminoethylphosphonate importer (TC 3.A.1.11.5) family.

It localises to the cell inner membrane. Probably part of the PhnSTUV complex (TC 3.A.1.11.5) involved in 2-aminoethylphosphonate import. Probably responsible for energy coupling to the transport system. The protein is Putative 2-aminoethylphosphonate import ATP-binding protein PhnT (phnT) of Salmonella choleraesuis (strain SC-B67).